We begin with the raw amino-acid sequence, 260 residues long: Methanethiol S-methyltransferase (260 aa).

The next 5 membrane-spanning stretches (helical) occupy residues 27–47 (CYLF…GIGV), 55–75 (PGIT…LFAA), 107–127 (CLVL…VWNV), 134–154 (GLLI…TFLI), and 196–216 (FLIA…FAIL).

It belongs to the nurim family.

The protein resides in the membrane. The catalysed reaction is methanethiol + S-adenosyl-L-methionine = dimethyl sulfide + S-adenosyl-L-homocysteine + H(+). Functionally, catalyzes the methylation of methanethiol (MeSH) to yield dimethylsulphide (DMS). The sequence is that of Methanethiol S-methyltransferase from Pseudomonas sp. (strain GM41(2012)).